The following is a 789-amino-acid chain: LPS-assembly protein LptD (789 aa).

Residues 1-39 (MPPRQLSQTTPSCAVVPRKRRLVAALIAVPGLMPALAHA) form the signal peptide.

Belongs to the LptD family. In terms of assembly, component of the lipopolysaccharide transport and assembly complex. Interacts with LptE and LptA.

The protein resides in the cell outer membrane. Functionally, together with LptE, is involved in the assembly of lipopolysaccharide (LPS) at the surface of the outer membrane. The chain is LPS-assembly protein LptD from Paraburkholderia xenovorans (strain LB400).